We begin with the raw amino-acid sequence, 254 residues long: Axonemal dynein light intermediate polypeptide 1 (254 aa).

The disordered stretch occupies residues M1–L55. Residues A175 to Q245 are a coiled coil.

This sequence belongs to the inner dynein arm light chain family.

The protein localises to the cell projection. Its subcellular location is the cilium. It is found in the flagellum. The protein resides in the dynein axonemal particle. It localises to the cytoplasm. Functionally, involved in sperm flagellum assembly. This is Axonemal dynein light intermediate polypeptide 1 from Xenopus laevis (African clawed frog).